We begin with the raw amino-acid sequence, 397 residues long: Phosphoglycerate kinase (397 aa).

Substrate contacts are provided by residues 21 to 23, arginine 37, 60 to 63, arginine 119, and arginine 152; these read DFN and HLGR. Residues lysine 203, glycine 294, glutamate 325, and 354-357 contribute to the ATP site; that span reads GGDS.

It belongs to the phosphoglycerate kinase family. In terms of assembly, monomer.

It localises to the cytoplasm. It carries out the reaction (2R)-3-phosphoglycerate + ATP = (2R)-3-phospho-glyceroyl phosphate + ADP. The protein operates within carbohydrate degradation; glycolysis; pyruvate from D-glyceraldehyde 3-phosphate: step 2/5. This chain is Phosphoglycerate kinase, found in Chlorobium chlorochromatii (strain CaD3).